A 395-amino-acid polypeptide reads, in one-letter code: ATP phosphoribosyltransferase regulatory subunit (395 aa).

The protein belongs to the class-II aminoacyl-tRNA synthetase family. HisZ subfamily. Heteromultimer composed of HisG and HisZ subunits.

The protein resides in the cytoplasm. It functions in the pathway amino-acid biosynthesis; L-histidine biosynthesis; L-histidine from 5-phospho-alpha-D-ribose 1-diphosphate: step 1/9. Functionally, required for the first step of histidine biosynthesis. May allow the feedback regulation of ATP phosphoribosyltransferase activity by histidine. The chain is ATP phosphoribosyltransferase regulatory subunit from Pseudomonas fluorescens (strain ATCC BAA-477 / NRRL B-23932 / Pf-5).